The following is a 156-amino-acid chain: MKTIQGVVAAPQARVAIAISRFNHFINDSLLEGAIDALKRIGQVSDENITVVWVPGAYELPLTVRALASSGRYDAVVALGTVIRGGTAHFEFVAGECSSGLASVALNTDVPVAFGVLTTETIEQAIDRAGAKAGNKGAEAALTALEMINVLKAIKA.

Residues Phe22, 57–59, and 81–83 each bind 5-amino-6-(D-ribitylamino)uracil; these read AYE and TVI. A (2S)-2-hydroxy-3-oxobutyl phosphate-binding site is contributed by 86-87; sequence GT. His89 acts as the Proton donor in catalysis. Phe114 is a binding site for 5-amino-6-(D-ribitylamino)uracil. (2S)-2-hydroxy-3-oxobutyl phosphate is bound at residue Arg128.

Belongs to the DMRL synthase family. As to quaternary structure, forms an icosahedral capsid composed of 60 subunits, arranged as a dodecamer of pentamers.

The enzyme catalyses (2S)-2-hydroxy-3-oxobutyl phosphate + 5-amino-6-(D-ribitylamino)uracil = 6,7-dimethyl-8-(1-D-ribityl)lumazine + phosphate + 2 H2O + H(+). Its pathway is cofactor biosynthesis; riboflavin biosynthesis; riboflavin from 2-hydroxy-3-oxobutyl phosphate and 5-amino-6-(D-ribitylamino)uracil: step 1/2. Functionally, catalyzes the formation of 6,7-dimethyl-8-ribityllumazine by condensation of 5-amino-6-(D-ribitylamino)uracil with 3,4-dihydroxy-2-butanone 4-phosphate. This is the penultimate step in the biosynthesis of riboflavin. The polypeptide is 6,7-dimethyl-8-ribityllumazine synthase (Edwardsiella ictaluri (strain 93-146)).